A 104-amino-acid polypeptide reads, in one-letter code: Secretoglobin family 3A member 1 (104 aa).

Positions 1 to 20 (MKLAALLGLCVALSCSSAAA) are cleaved as a signal peptide.

This sequence belongs to the secretoglobin family. UGRP subfamily. Homodimer; disulfide-linked. In terms of tissue distribution, highly expressed in lung and prostate. Also found in mammary gland, spleen, pancreas, testis and liver. Detected throughout the airway epithelium in lung, with highest expression in large airways. Found in lung submucosal glands where it localizes to acinar and ductile cells. Not detected in respiratory bronchioles, alveolar ducts or alveolar epithelium. In mammary gland, specifically localizes to luminal epithelial cells.

The protein resides in the secreted. Secreted cytokine-like protein. Inhibits cell growth in vitro. The polypeptide is Secretoglobin family 3A member 1 (SCGB3A1) (Homo sapiens (Human)).